The following is a 360-amino-acid chain: Alanine racemase (360 aa).

Lys34 (proton acceptor; specific for D-alanine) is an active-site residue. N6-(pyridoxal phosphate)lysine is present on Lys34. Position 129 (Arg129) interacts with substrate. Tyr254 (proton acceptor; specific for L-alanine) is an active-site residue. A substrate-binding site is contributed by Met302.

The protein belongs to the alanine racemase family. Pyridoxal 5'-phosphate serves as cofactor.

It catalyses the reaction L-alanine = D-alanine. It functions in the pathway amino-acid biosynthesis; D-alanine biosynthesis; D-alanine from L-alanine: step 1/1. Catalyzes the interconversion of L-alanine and D-alanine. May also act on other amino acids. The polypeptide is Alanine racemase (alr) (Pectobacterium atrosepticum (strain SCRI 1043 / ATCC BAA-672) (Erwinia carotovora subsp. atroseptica)).